The chain runs to 205 residues: HTH-type transcriptional repressor KstR2 (205 aa).

Residues 10-70 enclose the HTH tetR-type domain; sequence ASRRDELLQL…EVLRDFLDWL (61 aa). The segment at residues 33-52 is a DNA-binding region (H-T-H motif); the sequence is TVRDIADSAGILSGSLYHHF.

Homodimer.

Its function is as follows. Controls the expression of a small regulon that may play a role in the utilization of cholesterol. The sequence is that of HTH-type transcriptional repressor KstR2 (kstR2) from Mycolicibacterium smegmatis (strain ATCC 700084 / mc(2)155) (Mycobacterium smegmatis).